The chain runs to 423 residues: Putative competence-damage inducible protein (423 aa).

This sequence belongs to the CinA family.

The polypeptide is Putative competence-damage inducible protein (Streptococcus pyogenes serotype M3 (strain ATCC BAA-595 / MGAS315)).